We begin with the raw amino-acid sequence, 413 residues long: Multifunctional CCA protein (413 aa).

ATP-binding residues include Gly8 and Arg11. 2 residues coordinate CTP: Gly8 and Arg11. Positions 21 and 23 each coordinate Mg(2+). ATP contacts are provided by Arg91, Arg137, and Arg140. Residues Arg91, Arg137, and Arg140 each contribute to the CTP site. An HD domain is found at 228-329; that stretch reads TGIHTLMTLS…VKLFDSIDAW (102 aa).

Belongs to the tRNA nucleotidyltransferase/poly(A) polymerase family. Bacterial CCA-adding enzyme type 1 subfamily. Monomer. Can also form homodimers and oligomers. Requires Mg(2+) as cofactor. Ni(2+) serves as cofactor.

It catalyses the reaction a tRNA precursor + 2 CTP + ATP = a tRNA with a 3' CCA end + 3 diphosphate. The catalysed reaction is a tRNA with a 3' CCA end + 2 CTP + ATP = a tRNA with a 3' CCACCA end + 3 diphosphate. Catalyzes the addition and repair of the essential 3'-terminal CCA sequence in tRNAs without using a nucleic acid template. Adds these three nucleotides in the order of C, C, and A to the tRNA nucleotide-73, using CTP and ATP as substrates and producing inorganic pyrophosphate. tRNA 3'-terminal CCA addition is required both for tRNA processing and repair. Also involved in tRNA surveillance by mediating tandem CCA addition to generate a CCACCA at the 3' terminus of unstable tRNAs. While stable tRNAs receive only 3'-terminal CCA, unstable tRNAs are marked with CCACCA and rapidly degraded. This is Multifunctional CCA protein from Citrobacter koseri (strain ATCC BAA-895 / CDC 4225-83 / SGSC4696).